The primary structure comprises 244 residues: 5-oxoprolinase subunit A (244 aa).

The protein belongs to the LamB/PxpA family. Forms a complex composed of PxpA, PxpB and PxpC.

The catalysed reaction is 5-oxo-L-proline + ATP + 2 H2O = L-glutamate + ADP + phosphate + H(+). Functionally, catalyzes the cleavage of 5-oxoproline to form L-glutamate coupled to the hydrolysis of ATP to ADP and inorganic phosphate. The protein is 5-oxoprolinase subunit A of Escherichia coli O6:K15:H31 (strain 536 / UPEC).